We begin with the raw amino-acid sequence, 170 residues long: MILLKLYLTLAAILCQSRGTTSLDLDDLMTTNPEIQNEIINKHNDLRRTVDPPAKNMLKMSWDNIIAESAKRAALRCNQNEHTPVSGRTIGGVVCGENYFMSSNPRTWSFGIQSWFDERNYFKFGFGPTRAGVMVGHYTQVVWYKSYKMGCAINLCPNEPLKYFLVCQYC.

Residues 1 to 22 (MILLKLYLTLAAILCQSRGTTS) form the signal peptide. The SCP domain maps to 41–169 (NKHNDLRRTV…PLKYFLVCQY (129 aa)). 3 cysteine pairs are disulfide-bonded: Cys77–Cys156, Cys95–Cys170, and Cys151–Cys167.

This sequence belongs to the CRISP family. In terms of processing, contains 8 disulfide bonds. As to expression, expressed by the venom gland.

It is found in the secreted. Functionally, blocks ryanodine receptors, and potassium channels. The protein is Cysteine-rich venom protein VAR4 of Varanus acanthurus (Ridge-tailed monitor).